The chain runs to 366 residues: Aminomethyltransferase (366 aa).

It belongs to the GcvT family. As to quaternary structure, the glycine cleavage system is composed of four proteins: P, T, L and H.

The catalysed reaction is N(6)-[(R)-S(8)-aminomethyldihydrolipoyl]-L-lysyl-[protein] + (6S)-5,6,7,8-tetrahydrofolate = N(6)-[(R)-dihydrolipoyl]-L-lysyl-[protein] + (6R)-5,10-methylene-5,6,7,8-tetrahydrofolate + NH4(+). In terms of biological role, the glycine cleavage system catalyzes the degradation of glycine. The chain is Aminomethyltransferase from Bacillus mycoides (strain KBAB4) (Bacillus weihenstephanensis).